We begin with the raw amino-acid sequence, 242 residues long: Putative S-adenosyl-L-methionine-dependent methyltransferase Mmcs_0580 (242 aa).

S-adenosyl-L-methionine-binding positions include D104 and 134-135; that span reads DL.

The protein belongs to the UPF0677 family.

Exhibits S-adenosyl-L-methionine-dependent methyltransferase activity. This is Putative S-adenosyl-L-methionine-dependent methyltransferase Mmcs_0580 from Mycobacterium sp. (strain MCS).